A 376-amino-acid polypeptide reads, in one-letter code: Probable sister chromatid cohesion protein DCC1 (376 aa).

Residues 213–232 (QKSPTNSGGGGEEIKGGGGD) form a disordered region. Positions 219-232 (SGGGGEEIKGGGGD) are enriched in gly residues.

It belongs to the DCC1 family.

It localises to the nucleus. Loads PCNA onto primed templates regulating velocity, spacing and restart activity of replication forks. May couple DNA replication to sister chromatid cohesion. The polypeptide is Probable sister chromatid cohesion protein DCC1 (Dictyostelium discoideum (Social amoeba)).